The primary structure comprises 143 residues: Large ribosomal subunit protein uL15 (143 aa).

Residues 1–54 form a disordered region; it reads MELNSIKPAEGAKHAKRRVGRGIGSGLGKTAGRGHKGQKSRSGGYHKVGFEGGQ. The span at 21-31 shows a compositional bias: gly residues; that stretch reads RGIGSGLGKTA.

The protein belongs to the universal ribosomal protein uL15 family. Part of the 50S ribosomal subunit.

Its function is as follows. Binds to the 23S rRNA. This Paracidovorax citrulli (strain AAC00-1) (Acidovorax citrulli) protein is Large ribosomal subunit protein uL15.